A 448-amino-acid chain; its full sequence is N-succinylarginine dihydrolase (448 aa).

Residues 19–28 (GGLSYGNVAS), asparagine 110, and 137–138 (HR) each bind substrate. The active site involves glutamate 174. Substrate is bound at residue arginine 214. Residue histidine 250 is part of the active site. Substrate-binding residues include aspartate 252 and asparagine 365. Cysteine 371 acts as the Nucleophile in catalysis.

Belongs to the succinylarginine dihydrolase family. In terms of assembly, homodimer.

The catalysed reaction is N(2)-succinyl-L-arginine + 2 H2O + 2 H(+) = N(2)-succinyl-L-ornithine + 2 NH4(+) + CO2. The protein operates within amino-acid degradation; L-arginine degradation via AST pathway; L-glutamate and succinate from L-arginine: step 2/5. Catalyzes the hydrolysis of N(2)-succinylarginine into N(2)-succinylornithine, ammonia and CO(2). The polypeptide is N-succinylarginine dihydrolase (Pseudomonas aeruginosa (strain UCBPP-PA14)).